The sequence spans 168 residues: Small ribosomal subunit protein uS5 (168 aa).

Residues 13-76 (LKEQVVDIKR…EDAKKNLIHV (64 aa)) enclose the S5 DRBM domain.

The protein belongs to the universal ribosomal protein uS5 family. As to quaternary structure, part of the 30S ribosomal subunit. Contacts proteins S4 and S8.

Its function is as follows. With S4 and S12 plays an important role in translational accuracy. Located at the back of the 30S subunit body where it stabilizes the conformation of the head with respect to the body. This chain is Small ribosomal subunit protein uS5, found in Alkaliphilus oremlandii (strain OhILAs) (Clostridium oremlandii (strain OhILAs)).